Here is a 661-residue protein sequence, read N- to C-terminus: Sperm transmembrane protein 9 (661 aa).

Residues 1 to 16 (MNVILVLVVLFFAGDC) form the signal peptide. Residues 17–618 (AKIRKIIDFL…MTNRLMKNYE (602 aa)) are Extracellular-facing. The region spanning 52 to 90 (NFNPCLENPKICSNRGKCLHENGNFYCICPVTHYGKTCE) is the EGF-like 1 domain. Cystine bridges form between C56–C69, C63–C78, and C80–C89. Residues N105, N106, N134, and N190 are each glycosylated (N-linked (GlcNAc...) asparagine). The EGF-like 2 domain occupies 210–259 (QISACFDTQCDNGGICEDVVDWKTKTVTATCKCPSAIELIGGTVTGENCE). Intrachain disulfides connect C214-C225, C219-C240, and C242-C258. Residues N279, N290, N316, and N338 are each glycosylated (N-linked (GlcNAc...) asparagine). Positions 377 to 379 (RGD) match the Cell attachment site motif. EGF-like domains lie at 377–414 (RGDR…EKCE), 519–557 (HTNP…SLCE), and 559–600 (VDDS…LDCN). Cystine bridges form between C385–C402, C393–C404, C413–C419, C523–C534, C528–C545, C547–C556, C563–C576, C571–C588, and C590–C599. The N-linked (GlcNAc...) asparagine glycan is linked to N549. Residues 619-639 (FSLPLVACFVSLAILLPVIVI) form a helical membrane-spanning segment. Topologically, residues 640–661 (SRRRQGRVEEAKKTSEVKTENP) are cytoplasmic.

In terms of tissue distribution, expressed in spermatids, during spermogenesis expression is primarily localized to the pseudopod.

Its subcellular location is the cytoplasm. The protein resides in the membrane. Required for fertilization. May be required for cell adhesion and/or function as a signaling molecule. The chain is Sperm transmembrane protein 9 (spe-9) from Caenorhabditis elegans.